A 437-amino-acid polypeptide reads, in one-letter code: C-terminal-binding protein 2 (437 aa).

Residues Ser-103, 183 to 188 (IGLGRI), Asp-207, 240 to 246 (CNLNEHN), 267 to 269 (TAR), and Asp-293 each bind NAD(+). Residue Arg-269 is part of the active site. Residue Glu-298 is part of the active site. The active-site Proton donor is the His-318. 318-321 (HTAW) is a binding site for NAD(+). The disordered stretch occupies residues 410-437 (PLIPSVSHTPSPGQTTKPDPDREIPTDQ). The span at 415-426 (VSHTPSPGQTTK) shows a compositional bias: polar residues. The span at 427-437 (PDPDREIPTDQ) shows a compositional bias: basic and acidic residues.

The protein belongs to the D-isomer specific 2-hydroxyacid dehydrogenase family. Interacts with the C-terminus of tcf7l1-a via the consensus motifs P-X-[DNS]-L-[STVA].

The protein localises to the nucleus. Functionally, corepressor targeting diverse transcription regulators. This is C-terminal-binding protein 2 (ctbp2) from Xenopus laevis (African clawed frog).